The primary structure comprises 1307 residues: Rho1 guanine nucleotide exchange factor TUS1 (1307 aa).

Polar residues predominate over residues 1 to 10; it reads MYRYNRSSPF. Disordered regions lie at residues 1–144, 164–194, and 219–239; these read MYRY…FIGN, PFANGFSPNSPKSPRDSSKQQAHFSDESDLR, and EDSEFFTKPPPPLSTSRNVSG. Basic and acidic residues predominate over residues 12–29; that stretch reads RTPEKRVSRQESQRKSIE. Over residues 37–79 the composition is skewed to polar residues; the sequence is NTRNSFLDDSDNGTDNISIGWTPISDTQQFQSPVPQAFTFTSK. Positions 87-97 are enriched in low complexity; sequence TSSSESTPKST. A compositionally biased stretch (basic and acidic residues) spans 176–194; the sequence is SPRDSSKQQAHFSDESDLR. A DH domain is found at 467–657; it reads QRQSFIFDLI…EKLNFEVNQV (191 aa). In terms of domain architecture, PH spans 715–877; sequence KLVLSGTVYK…WIDAIMESFK (163 aa). Residues 780–802 are disordered; it reads TSKQPLRNYSQKEHKSPMHNFST. In terms of domain architecture, CNH spans 938-1279; it reads TTRILCCEDV…KLASSERREK (342 aa).

As to quaternary structure, interacts with RHO1.

Guanine nucleotide-exchange factor (GEF) for RHO1 that stimulates the exchange of RHO1 GDP-bound form into GTP-bound form. Required for signaling of cell wall defects to RHO1. The protein is Rho1 guanine nucleotide exchange factor TUS1 (TUS1) of Saccharomyces cerevisiae (strain ATCC 204508 / S288c) (Baker's yeast).